The primary structure comprises 945 residues: Argonaute protein wago-1 (945 aa).

Over residues 1 to 20 (MSPHPPQPHPPMPPMPPVTA) the composition is skewed to pro residues. The interval 1–41 (MSPHPPQPHPPMPPMPPVTAPPGAMTPMPPVPADAQKLHQS) is disordered. The region spanning 322–432 (TVIQKLFDIT…FPAELMTVSR (111 aa)) is the PAZ domain. The Piwi domain maps to 636-899 (VKDGKRLTLE…PLYVANEYAK (264 aa)).

The protein belongs to the Argonaute family. WAGO subfamily. As to quaternary structure, interacts with rde-12. Interacts with znfx-1. In terms of tissue distribution, enriched in sperm and oocytes.

Its subcellular location is the cytoplasmic granule. In terms of biological role, argonaute protein which is involved in the endogenous small interfering RNA (endo-siRNA) pathway. Interacts with secondary 22G-RNAs, which are RNA-dependent RNA polymerase-derived endo-siRNAs, typically 22 nucleotides in length with a 5'guanosine residue. In the germline, functions in a genome surveillance system to silence transposons and aberrant transcripts. The polypeptide is Argonaute protein wago-1 (Caenorhabditis elegans).